The primary structure comprises 459 residues: Vanillin aminotransferase (459 aa).

Residues 115–116 (GS) and Asp255 each bind pyridoxal 5'-phosphate. Residue Lys284 is modified to N6-(pyridoxal phosphate)lysine. A pyridoxal 5'-phosphate-binding site is contributed by 320–321 (FT). The stretch at 428-459 (LSLEELDELIRIYGKALKDTEKRVEELKSQKK) forms a coiled coil.

Belongs to the class-III pyridoxal-phosphate-dependent aminotransferase family. In terms of tissue distribution, expressed in placental tissue of immature fruit.

The enzyme catalyses vanillin + L-alanine = vanillylamine + pyruvate. It participates in aromatic compound metabolism; phenylpropanoid biosynthesis. Its function is as follows. Involved in the biosynthesis of capsaicinoids natural products, pungent alkaloids synthesized from phenylpropanoid intermediates in the placental tissue of chili pepper fruit acting as repellant on herbivorous mammals and conferring spiciness to hot peppers. Can transfer an amine from vanillylamine to pyruvate forming vanillin and L-alanine. Can use pyruvate or oxaloacetate, but not 2-oxoglutarate as amino group acceptors. Is able to convert (S)-1-phenylethylamine into acetophenone in vitro. The polypeptide is Vanillin aminotransferase (Capsicum chinense (Scotch bonnet)).